Here is a 149-residue protein sequence, read N- to C-terminus: MADNLTEEQIAEFKEAFSLFDKDGDGTITTKELGTVMRSLGQNPTEAELQDMINEVDADGNGTIDFPEFLSLMARKMKDTDTEEELVEAFKVFDRDGNGLISAAELRHVMTNLGEKLTDEEVDEMIREADVDGDGHINYEEFVRMMMAK.

A2 is subject to N-acetylalanine. 4 consecutive EF-hand domains span residues E8 to N43, P44 to D79, D81 to K116, and L117 to K149. D21, D23, D25, T27, E32, D57, D59, N61, T63, E68, D94, D96, N98, and E105 together coordinate Ca(2+). K116 is subject to N6,N6,N6-trimethyllysine. Ca(2+) is bound by residues D130, D132, D134, H136, and E141.

The protein belongs to the calmodulin family.

Its function is as follows. Calmodulin mediates the control of a large number of enzymes, ion channels and other proteins by Ca(2+). Among the enzymes to be stimulated by the calmodulin-Ca(2+) complex are a number of protein kinases and phosphatases. The polypeptide is Calmodulin (Stylonychia lemnae (Ciliate)).